A 941-amino-acid polypeptide reads, in one-letter code: Pre-mRNA-processing factor 6 (941 aa).

A disordered region spans residues M1 to D79. Positions D39 to A65 are enriched in basic and acidic residues. The span at A66–Y78 shows a compositional bias: acidic residues. S143 is modified (phosphoserine). A phosphothreonine mark is found at T180, T266, and T275. Residue S279 is modified to Phosphoserine. HAT repeat units lie at residues T384–P416, D418–E444, T445–A476, N554–N586, G588–L620, G622–E654, D689–Q721, E723–K755, and R855–Q887.

As to quaternary structure, identified in the spliceosome B complex. Identified in the spliceosome C complex. Associates with the U5 snRNP particle. Component of the U4/U6-U5 tri-snRNP complex composed of the U4, U6 and U5 snRNAs and at least PRPF3, PRPF4, PRPF6, PRPF8, PRPF31, SNRNP200, TXNL4A, SNRNP40, DDX23, CD2BP2, PPIH, SNU13, EFTUD2, SART1 and USP39, LSm proteins LSm2-8 and Sm proteins. Interacts with ARAF1. Interacts with AR and NR3C1, but not ESR1, independently of the presence of hormones. Interacts with USH1G. In terms of processing, phosphorylated by PRP4K during spliceosome assembly.

It localises to the nucleus. It is found in the nucleoplasm. Its subcellular location is the nucleus speckle. Involved in pre-mRNA splicing as component of the U4/U6-U5 tri-snRNP complex, one of the building blocks of the spliceosome. Enhances dihydrotestosterone-induced transactivation activity of AR, as well as dexamethasone-induced transactivation activity of NR3C1, but does not affect estrogen-induced transactivation. This Pongo abelii (Sumatran orangutan) protein is Pre-mRNA-processing factor 6 (PRPF6).